Here is a 237-residue protein sequence, read N- to C-terminus: Putative biotin ligase (237 aa).

A BPL/LPL catalytic domain is found at 1–191 (MEIIHLSEID…KKYKKYSITI (191 aa)).

The protein belongs to the biotin--protein ligase family.

The enzyme catalyses biotin + L-lysyl-[protein] + ATP = N(6)-biotinyl-L-lysyl-[protein] + AMP + diphosphate + H(+). The polypeptide is Putative biotin ligase (Methanocaldococcus jannaschii (strain ATCC 43067 / DSM 2661 / JAL-1 / JCM 10045 / NBRC 100440) (Methanococcus jannaschii)).